Consider the following 118-residue polypeptide: Large ribosomal subunit protein uL18 (118 aa).

The disordered stretch occupies residues 1-25; it reads MISKPDKNKIRQKRHRRVRGKLSGT. The span at 10–20 shows a compositional bias: basic residues; sequence IRQKRHRRVRG.

Belongs to the universal ribosomal protein uL18 family. As to quaternary structure, part of the 50S ribosomal subunit; part of the 5S rRNA/L5/L18/L25 subcomplex. Contacts the 5S and 23S rRNAs.

Its function is as follows. This is one of the proteins that bind and probably mediate the attachment of the 5S RNA into the large ribosomal subunit, where it forms part of the central protuberance. The chain is Large ribosomal subunit protein uL18 from Streptococcus pyogenes serotype M5 (strain Manfredo).